Reading from the N-terminus, the 523-residue chain is Cytokinin dehydrogenase 3 (523 aa).

The first 31 residues, 1-31 (MASYNLRSQVRLIAITIVIIITLSTPITTNT), serve as a signal peptide directing secretion. The FAD-binding PCMH-type domain occupies 66–243 (TKIFPSAVLI…TRARIKLEVA (178 aa)). FAD is bound by residues A100, G102, and G104. H105 carries the post-translational modification Pros-8alpha-FAD histidine. FAD is bound by residues S106 and Q110. N-linked (GlcNAc...) asparagine glycosylation is present at N153. D167, T172, S178, I182, and I233 together coordinate FAD. N408 carries N-linked (GlcNAc...) asparagine glycosylation. 3 residues coordinate FAD: Y476, S511, and Q514.

The protein belongs to the oxygen-dependent FAD-linked oxidoreductase family. FAD is required as a cofactor. As to expression, very weak expression in the young shoot tissues around two weeks after germination. Present in the center of the floral meristem and the boundary between long stamen primordia and gynoecial primordia.

The protein localises to the endoplasmic reticulum. The protein resides in the vacuole. It catalyses the reaction N(6)-dimethylallyladenine + A + H2O = 3-methyl-2-butenal + adenine + AH2. Functionally, catalyzes the oxidation of cytokinins, a family of N(6)-substituted adenine derivatives that are plant hormones, where the substituent is an isopentenyl group. Catalyzes in vitro the oxidation of various types of cytokinin nucleotides that are known as direct products of cytokinin biosynthesis. In association with CKX5 regulates the activity of the reproductive meristems, flower organ size and ovule formation. This chain is Cytokinin dehydrogenase 3 (CKX3), found in Arabidopsis thaliana (Mouse-ear cress).